Consider the following 437-residue polypeptide: Eukaryotic peptide chain release factor subunit 1 (437 aa).

The short motif at asparagine 61–serine 64 is the NIKS motif; plays an important role in translational termination element.

This sequence belongs to the eukaryotic release factor 1 family. Component of the eRF1-eRF3-GTP ternary complex, composed of ETF1/ERF1 and eRF3 (GSPT1/ERF3A or GSPT2/ERF3B) and GTP.

It is found in the cytoplasm. Component of the eRF1-eRF3-GTP ternary complex, a ternary complex that mediates translation termination in response to the termination codons. The eRF1-eRF3-GTP complex binds to a stop codon in the ribosomal A-site. ETF1/ERF1 is responsible for stop codon recognition and inducing hydrolysis of peptidyl-tRNA. Following GTP hydrolysis, eRF3 (GSPT1/ERF3A or GSPT2/ERF3B) dissociates, permitting ETF1/eRF1 to accommodate fully in the A-site, followed by hydrolysis of peptidyl-tRNA. The sequence is that of Eukaryotic peptide chain release factor subunit 1 (etf1) from Xenopus laevis (African clawed frog).